The following is a 413-amino-acid chain: Bestrophin homolog 13 (413 aa).

Helical transmembrane passes span Leu-29–Ile-49, Ser-72–Ala-92, Leu-236–Gly-256, and Leu-272–Gly-292.

The protein belongs to the anion channel-forming bestrophin (TC 1.A.46) family. Calcium-sensitive chloride channel subfamily. Forms oligomers.

The protein resides in the cell membrane. Forms chloride channels. The polypeptide is Bestrophin homolog 13 (best-13) (Caenorhabditis elegans).